The following is a 1208-amino-acid chain: ATP-dependent DNA helicase Q4 (1208 aa).

Disordered stretches follow at residues 17–180 (AFRR…ASLS) and 201–333 (FLGA…AGKA). Position 27 is a phosphoserine (S27). Basic and acidic residues predominate over residues 36-47 (EETRALYREYRT). Residues 61 to 70 (SSESLPAAAE) show a composition bias toward low complexity. The span at 86–100 (ATKSPQSTPGRSRQG) shows a compositional bias: polar residues. Residues S178 and S180 each carry the phosphoserine modification. Over residues 273–283 (AQVQQESSQAG) the composition is skewed to polar residues. A Helicase ATP-binding domain is found at 489–662 (VMRILSGIST…AQHLAVAEEP (174 aa)). 502–509 (LPTGAGKS) contacts ATP. The DEAH box signature appears at 605–608 (DEAH). Residues 683 to 850 (DTDQALLTLL…AVKRLVQRVF (168 aa)) enclose the Helicase C-terminal domain. C853 and C855 together coordinate Zn(2+). The interval 860-888 (PPSEQEGAVGGERPVPKYPPQEAEQLSHQ) is disordered. The Zn(2+) site is built by C897 and H900. The disordered stretch occupies residues 1111-1130 (EEGQEPGGMEDAQGPEPGQA). An increases helicase activity about 5-fold (in a fragment starting at residue 427) region spans residues 1117 to 1208 (GGMEDAQGPE…ATEELLQVAR (92 aa)).

The protein belongs to the helicase family. RecQ subfamily. As to quaternary structure, interacts with UBR1 and UBR2. Interacts with MCM10; this interaction regulates RECQL4 unwinding activity. Interacts (via residues 1-54) with TOPBP1. Requires Zn(2+) as cofactor. As to expression, ubiquitously expressed, with highest levels in thymus and testis.

The protein resides in the cytoplasm. Its subcellular location is the nucleus. It carries out the reaction Couples ATP hydrolysis with the unwinding of duplex DNA by translocating in the 3'-5' direction.. The catalysed reaction is ATP + H2O = ADP + phosphate + H(+). An ATP-dependent DNA helicase which unwinds dsDNA with a 3'-overhang in a 3'-5' direction. Does not unwind more than 18 bp of dsDNA. May modulate chromosome segregation. The N-terminal domain (residues 1-54) binds DNA Y-shaped DNA better than ss- or dsDNA. The core helicase domain binds ssDNA. This is ATP-dependent DNA helicase Q4 (RECQL4) from Homo sapiens (Human).